The chain runs to 140 residues: Organic hydroperoxide resistance protein-like (140 aa).

The protein belongs to the OsmC/Ohr family.

In Staphylococcus aureus (strain MRSA252), this protein is Organic hydroperoxide resistance protein-like.